Here is a 252-residue protein sequence, read N- to C-terminus: MMLHAQHMPGQPGAPSLVFLHGFSGDCREWQPVGEQFHGCSRLYIDLPGHGGSAAIPVGGFADVIRLLRATLISYNILKFWLVGYSLGGRVAMMAACQGIPGLCGLVVEGGHPGLQNEQARVERRLSDGRWAERFRREPLTEVFHDWYQQPVFASLTAQQRQALTALRSQNNGETLAAMLEATSLAVQPDLREALNALAFPFYYLCGERDSKFRALAQEVAATCHVIRNAGHNAHRENPAGVVDSLAQILRL.

The protein belongs to the AB hydrolase superfamily. MenH family. In terms of assembly, monomer.

It carries out the reaction 5-enolpyruvoyl-6-hydroxy-2-succinyl-cyclohex-3-ene-1-carboxylate = (1R,6R)-6-hydroxy-2-succinyl-cyclohexa-2,4-diene-1-carboxylate + pyruvate. It functions in the pathway quinol/quinone metabolism; 1,4-dihydroxy-2-naphthoate biosynthesis; 1,4-dihydroxy-2-naphthoate from chorismate: step 3/7. It participates in quinol/quinone metabolism; menaquinone biosynthesis. Functionally, catalyzes a proton abstraction reaction that results in 2,5-elimination of pyruvate from 2-succinyl-5-enolpyruvyl-6-hydroxy-3-cyclohexene-1-carboxylate (SEPHCHC) and the formation of 2-succinyl-6-hydroxy-2,4-cyclohexadiene-1-carboxylate (SHCHC). This chain is 2-succinyl-6-hydroxy-2,4-cyclohexadiene-1-carboxylate synthase, found in Salmonella paratyphi B (strain ATCC BAA-1250 / SPB7).